Consider the following 278-residue polypeptide: Ras-related protein rapC (278 aa).

10-17 (GASGTGKT) contributes to the GTP binding site. The short motif at 32-40 (YDPTIEDLY) is the Effector region element. Residues 58 to 62 (DTSGT) and 119 to 122 (NKCD) each bind GTP. Disordered stretches follow at residues 176 to 209 (NGSS…SSSS) and 236 to 278 (STSS…CLIM). Composition is skewed to low complexity over residues 198–209 (GSNNSSINSSSS) and 236–251 (STSS…SQTN). Cys275 bears the Cysteine methyl ester mark. Cys275 is lipidated: S-geranylgeranyl cysteine. Residues 276-278 (LIM) constitute a propeptide, removed in mature form.

It belongs to the small GTPase superfamily. Ras family.

It localises to the cell membrane. The enzyme catalyses GTP + H2O = GDP + phosphate + H(+). The protein is Ras-related protein rapC (rapC) of Dictyostelium discoideum (Social amoeba).